The following is a 1131-amino-acid chain: DNA polymerase II large subunit (1131 aa).

Belongs to the archaeal DNA polymerase II family. Heterodimer of a large subunit and a small subunit.

The enzyme catalyses DNA(n) + a 2'-deoxyribonucleoside 5'-triphosphate = DNA(n+1) + diphosphate. It carries out the reaction Exonucleolytic cleavage in the 3'- to 5'-direction to yield nucleoside 5'-phosphates.. Its function is as follows. Possesses two activities: a DNA synthesis (polymerase) and an exonucleolytic activity that degrades single-stranded DNA in the 3'- to 5'-direction. Has a template-primer preference which is characteristic of a replicative DNA polymerase. The sequence is that of DNA polymerase II large subunit from Methanococcus maripaludis (strain C5 / ATCC BAA-1333).